Here is an 86-residue protein sequence, read N- to C-terminus: Teretoxin Tsu6.16 (86 aa).

Positions 1–21 are cleaved as a signal peptide; that stretch reads MATSGRLLCVCLVMGLVFESL. Positions 22–46 are excised as a propeptide; sequence GYLTGREKRPAENLEASVQRRWYLN.

Belongs to the teretoxin M (TM) superfamily. Contains 3 disulfide bonds. In terms of tissue distribution, expressed by the venom duct.

It localises to the secreted. The chain is Teretoxin Tsu6.16 from Terebra subulata (Chocolate spotted auger).